The primary structure comprises 88 residues: DNA-directed RNA polymerase subunit omega (88 aa).

Belongs to the RNA polymerase subunit omega family. In terms of assembly, the RNAP catalytic core consists of 2 alpha, 1 beta, 1 beta' and 1 omega subunit. When a sigma factor is associated with the core the holoenzyme is formed, which can initiate transcription.

The catalysed reaction is RNA(n) + a ribonucleoside 5'-triphosphate = RNA(n+1) + diphosphate. Its function is as follows. Promotes RNA polymerase assembly. Latches the N- and C-terminal regions of the beta' subunit thereby facilitating its interaction with the beta and alpha subunits. This is DNA-directed RNA polymerase subunit omega from Salinispora tropica (strain ATCC BAA-916 / DSM 44818 / JCM 13857 / NBRC 105044 / CNB-440).